The sequence spans 676 residues: Multisubstrate pseudouridine synthase 7 (676 aa).

Disordered stretches follow at residues 1-27 (MSDS…AKKL) and 87-110 (KMPK…AARR). Serine 2 bears the N-acetylserine mark. Residues 94–110 (RSKEEVNAEKESEAARR) show a composition bias toward basic and acidic residues. Aspartate 256 (nucleophile) is an active-site residue. The region spanning 338 to 582 (GFINYFGMQR…AGSYRTVIQK (245 aa)) is the TRUD domain.

Belongs to the pseudouridine synthase TruD family.

It is found in the nucleus. It localises to the cytoplasm. The catalysed reaction is uridine in 5S rRNA = pseudouridine in 5S rRNA. It carries out the reaction uridine in snRNA = pseudouridine in snRNA. It catalyses the reaction uridine(13) in tRNA = pseudouridine(13) in tRNA. The enzyme catalyses a uridine in mRNA = a pseudouridine in mRNA. In terms of biological role, catalyzes pseudouridylation at position 35 in U2 snRNA stem-loop II region which induces particular conformation of the mRNA-U2 snRNA duplex and places the nucleophile in an accessible position for the first step of splicing. Also catalyzes pseudouridylation at position 56 in U2 snRNA. Also catalyzes pseudouridylation at position 50 in 5S rRNA, position 13 in cytoplasmic tRNAs, and position 35 in pre-tRNA(Tyr). Pseudouridine residues in tRNAs may stabilize the local RNA conformation, favor interactions with protein partners and play an important role in the stabilization of the codon-anticodon interaction with mRNA. Also catalyzes pseudouridylation of mRNAs in response to heat shock: mediates pseudouridylation of mRNAs with the consensus sequence 5'-UGUAR-3'. The sequence is that of Multisubstrate pseudouridine synthase 7 from Saccharomyces cerevisiae (strain ATCC 204508 / S288c) (Baker's yeast).